The primary structure comprises 118 residues: RxLR effector protein PITG_19617 (118 aa).

The first 21 residues, 1–21 (MRAVYILAMACAATLQASSSA), serve as a signal peptide directing secretion. The RxLR-dEER motif lies at 50 to 64 (RLLRVEDKEEETEEE).

Belongs to the RxLR effector family.

The protein localises to the secreted. It is found in the host nucleus. It localises to the host cytoplasm. Effector that enhances P.infestans colonization of Nicotiana benthamiana leaves. This chain is RxLR effector protein PITG_19617, found in Phytophthora infestans (strain T30-4) (Potato late blight agent).